Reading from the N-terminus, the 461-residue chain is Protein DVR-1 homolog (461 aa).

The signal sequence occupies residues 1–30 (MEYSRKTYLDLNIMAKYILILSLFFGPGLS). Residues 31–338 (WDVFYSGDED…QKKGGKRPRK (308 aa)) constitute a propeptide that is removed on maturation. An N-linked (GlcNAc...) asparagine glycan is attached at Asn149. The disordered stretch occupies residues 317–351 (SHLRRNRRAATRQKKGGKRPRKPDTDNDIASRDSA). Residues 318–337 (HLRRNRRAATRQKKGGKRPR) show a composition bias toward basic residues. The span at 338–347 (KPDTDNDIAS) shows a compositional bias: basic and acidic residues. Disulfide bonds link Cys360/Cys426, Cys389/Cys458, and Cys393/Cys460. Asn402 carries an N-linked (GlcNAc...) asparagine glycan.

Belongs to the TGF-beta family. Homodimer; disulfide-linked.

The protein resides in the secreted. The chain is Protein DVR-1 homolog (DVR1) from Strongylocentrotus purpuratus (Purple sea urchin).